We begin with the raw amino-acid sequence, 323 residues long: tRNA U34 carboxymethyltransferase (323 aa).

Residues lysine 90, tryptophan 104, lysine 109, glycine 129, 182–183 (IE), methionine 197, tyrosine 201, and arginine 316 contribute to the carboxy-S-adenosyl-L-methionine site.

This sequence belongs to the class I-like SAM-binding methyltransferase superfamily. CmoB family. Homotetramer.

It carries out the reaction carboxy-S-adenosyl-L-methionine + 5-hydroxyuridine(34) in tRNA = 5-carboxymethoxyuridine(34) in tRNA + S-adenosyl-L-homocysteine + H(+). In terms of biological role, catalyzes carboxymethyl transfer from carboxy-S-adenosyl-L-methionine (Cx-SAM) to 5-hydroxyuridine (ho5U) to form 5-carboxymethoxyuridine (cmo5U) at position 34 in tRNAs. The polypeptide is tRNA U34 carboxymethyltransferase (Idiomarina loihiensis (strain ATCC BAA-735 / DSM 15497 / L2-TR)).